The following is a 445-amino-acid chain: F-box protein At5g10340 (445 aa).

Residues 64–112 form the F-box domain; it reads SMEELLPHDVIEYHIMVRLDVKTLLKFKSVSKQWMSTIQSPSFQERQLI.

The chain is F-box protein At5g10340 from Arabidopsis thaliana (Mouse-ear cress).